The chain runs to 465 residues: MDTLRSISSELVRSSQLRWTLFSVIANMSLTLSIWIGVYNMEVNSELSKTYFLDPSFEQTTGNLLLDGFINGVGTILVLGCVSFIMLAFVLFDFRRIVKAWLTLSCLLILFGVSAQTLHDMFSQVFDQDDNNQYYMTIVLIVVPTVVYGFGGIYAFFSNSSLILHQIFVVTNCSLISVFYLRVFPSKTTWFVLWIVLFWDLFAVLAPMGPLKKVQEKASDYSKCVLNLIMFSANEKRLTAGSNQEETNEGEESTIRRTVKQTIEYYTKREAQDDEFYQKIRQRRAAINPDSVPTEHSPLVEAEPSPIELKEKNSTEELSDDESDTSETSSGSSNLSSSDSSTTVSTSDISTAEECDQKEWDDLVSNSLPNNDKRPATAADALNDGEVLRLGFGDFVFYSLLIGQAAASGCPFAVISAALGILFGLVVTLTVFSTEESTTPALPLPVICGTFCYFSSMFFWEQLYG.

Topologically, residues 1–18 are cytoplasmic; sequence MDTLRSISSELVRSSQLR. The chain crosses the membrane as a helical span at residues 19 to 39; that stretch reads WTLFSVIANMSLTLSIWIGVY. At 40 to 71 the chain is on the lumenal side; sequence NMEVNSELSKTYFLDPSFEQTTGNLLLDGFIN. A helical membrane pass occupies residues 72–92; it reads GVGTILVLGCVSFIMLAFVLF. Residues 93 to 96 lie on the Cytoplasmic side of the membrane; it reads DFRR. A helical transmembrane segment spans residues 97–117; sequence IVKAWLTLSCLLILFGVSAQT. The Lumenal portion of the chain corresponds to 118-136; that stretch reads LHDMFSQVFDQDDNNQYYM. Residues 137–157 form a helical membrane-spanning segment; it reads TIVLIVVPTVVYGFGGIYAFF. The Cytoplasmic segment spans residues 158–160; it reads SNS. Residues 161 to 181 form a helical membrane-spanning segment; that stretch reads SLILHQIFVVTNCSLISVFYL. Residues 182 to 190 are Lumenal-facing; the sequence is RVFPSKTTW. Residues 191–211 form a helical membrane-spanning segment; the sequence is FVLWIVLFWDLFAVLAPMGPL. Residue D200 is part of the active site. The Cytoplasmic segment spans residues 212–389; the sequence is KKVQEKASDY…DALNDGEVLR (178 aa). A disordered region spans residues 287–356; the sequence is INPDSVPTEH…SDISTAEECD (70 aa). A compositionally biased stretch (low complexity) spans 326 to 350; sequence SETSSGSSNLSSSDSSTTVSTSDIS. Residues 390–410 form a helical membrane-spanning segment; sequence LGFGDFVFYSLLIGQAAASGC. Residue D394 is part of the active site. Residue P411 is a topological domain, lumenal. Residues 412–432 form a helical membrane-spanning segment; it reads FAVISAALGILFGLVVTLTVF. The Cytoplasmic segment spans residues 433 to 439; that stretch reads STEESTT. The PAL motif lies at 440-442; the sequence is PAL. The segment at residues 440-460 is an intramembrane region (helical); it reads PALPLPVICGTFCYFSSMFFW. The Cytoplasmic segment spans residues 461–465; sequence EQLYG.

This sequence belongs to the peptidase A22A family. As to quaternary structure, homodimer. Potential component of the gamma-secretase complex, a complex probably composed of the presenilin homodimer (sel-12, hop-1 or spe-4), nicastrin (aph-2), aph-1 and pen-2.

Its subcellular location is the endoplasmic reticulum membrane. It is found in the golgi apparatus. The protein resides in the cis-Golgi network membrane. In terms of biological role, potential catalytic subunit of the gamma-secretase complex during spermatogenesis, an endoprotease complex that catalyzes the intramembrane cleavage of integral membrane proteins such as Notch receptors (lin-12 or glp-1). Involved in spermatid formation during meiosis II. May be required for proper localization of macromolecules that are subject to asymmetric partitioning during spermatogenesis. This Caenorhabditis elegans protein is Presenilin spe-4.